Consider the following 304-residue polypeptide: Undecaprenyl-diphosphatase (304 aa).

A run of 8 helical transmembrane segments spans residues 5-25 (FLFILKALIIAIVEGLTEFVP), 47-67 (GFPEMYEVVIQLGAILAVVVL), 72-92 (ISSSVVEFLSYIFSFIGLKAS), 111-131 (FGINVIIGTIPAAILGLLFHD), 137-157 (LFSTKTVAIGFIVGGILLIVI), 209-231 (ISGLSTTVATEFTFFLAIPAMVG), 248-268 (TNLISLILGFIVAFIVSLVVI), and 282-302 (IFAIYRVFAGIVLAILIFTKV).

Belongs to the UppP family.

It is found in the cell membrane. The enzyme catalyses di-trans,octa-cis-undecaprenyl diphosphate + H2O = di-trans,octa-cis-undecaprenyl phosphate + phosphate + H(+). In terms of biological role, catalyzes the dephosphorylation of undecaprenyl diphosphate (UPP). Confers resistance to bacitracin. The protein is Undecaprenyl-diphosphatase of Clostridium perfringens (strain SM101 / Type A).